The following is a 405-amino-acid chain: Serpin I2 (405 aa).

The signal sequence occupies residues 1-18 (MDTIFLWSLLLLFFGSQA). 3 N-linked (GlcNAc...) asparagine glycosylation sites follow: N202, N207, and N306.

Belongs to the serpin family. As to expression, expressed in pancreas and adipose tissues.

The protein localises to the secreted. In Homo sapiens (Human), this protein is Serpin I2 (SERPINI2).